A 351-amino-acid chain; its full sequence is S-adenosylmethionine:tRNA ribosyltransferase-isomerase (351 aa).

The protein belongs to the QueA family. In terms of assembly, monomer.

The protein localises to the cytoplasm. The enzyme catalyses 7-aminomethyl-7-carbaguanosine(34) in tRNA + S-adenosyl-L-methionine = epoxyqueuosine(34) in tRNA + adenine + L-methionine + 2 H(+). It functions in the pathway tRNA modification; tRNA-queuosine biosynthesis. Functionally, transfers and isomerizes the ribose moiety from AdoMet to the 7-aminomethyl group of 7-deazaguanine (preQ1-tRNA) to give epoxyqueuosine (oQ-tRNA). The sequence is that of S-adenosylmethionine:tRNA ribosyltransferase-isomerase from Hahella chejuensis (strain KCTC 2396).